The sequence spans 115 residues: Parathyroid hormone (115 aa).

Positions M1–G25 are cleaved as a signal peptide. A propeptide spanning residues K26–R31 is cleaved from the precursor. Positions R51–G69 are important for receptor binding. The disordered stretch occupies residues G77 to G99. The segment covering K84–G99 has biased composition (basic and acidic residues).

This sequence belongs to the parathyroid hormone family. In terms of assembly, interacts with PTH1R (via N-terminal extracellular domain).

The protein localises to the secreted. Functionally, parathyroid hormone elevates calcium level by dissolving the salts in bone and preventing their renal excretion. Acts by binding to its receptor, PTH1R, activating G protein-coupled receptor signaling. Stimulates [1-14C]-2-deoxy-D-glucose (2DG) transport and glycogen synthesis in osteoblastic cells. This is Parathyroid hormone from Bos taurus (Bovine).